We begin with the raw amino-acid sequence, 108 residues long: Nucleoid-associated protein BamMC406_1737 (108 aa).

The span at 85 to 95 shows a compositional bias: polar residues; that stretch reads ATSQEKMSGMT. A disordered region spans residues 85–108; sequence ATSQEKMSGMTSGLPLPPGFKLPF. The span at 99–108 shows a compositional bias: pro residues; sequence PLPPGFKLPF.

The protein belongs to the YbaB/EbfC family. In terms of assembly, homodimer.

The protein localises to the cytoplasm. The protein resides in the nucleoid. Binds to DNA and alters its conformation. May be involved in regulation of gene expression, nucleoid organization and DNA protection. The sequence is that of Nucleoid-associated protein BamMC406_1737 from Burkholderia ambifaria (strain MC40-6).